The primary structure comprises 316 residues: N-acetylmuramic acid 6-phosphate etherase (316 aa).

The segment at 1-24 (MTRFQSDAAVSADRGHLMTEQPNP) is disordered. The SIS domain maps to 66–229 (IASRLKDGGR…STAVMVRLGK (164 aa)). Residue E94 is the Proton donor of the active site. E125 is an active-site residue.

The protein belongs to the GCKR-like family. MurNAc-6-P etherase subfamily. In terms of assembly, homodimer.

It carries out the reaction N-acetyl-D-muramate 6-phosphate + H2O = N-acetyl-D-glucosamine 6-phosphate + (R)-lactate. It participates in amino-sugar metabolism; N-acetylmuramate degradation. Specifically catalyzes the cleavage of the D-lactyl ether substituent of MurNAc 6-phosphate, producing GlcNAc 6-phosphate and D-lactate. The sequence is that of N-acetylmuramic acid 6-phosphate etherase from Parasynechococcus marenigrum (strain WH8102).